Here is a 262-residue protein sequence, read N- to C-terminus: Tryptophan synthase alpha chain (262 aa).

Catalysis depends on proton acceptor residues Glu-48 and Asp-59.

The protein belongs to the TrpA family. In terms of assembly, tetramer of two alpha and two beta chains.

The catalysed reaction is (1S,2R)-1-C-(indol-3-yl)glycerol 3-phosphate + L-serine = D-glyceraldehyde 3-phosphate + L-tryptophan + H2O. It participates in amino-acid biosynthesis; L-tryptophan biosynthesis; L-tryptophan from chorismate: step 5/5. In terms of biological role, the alpha subunit is responsible for the aldol cleavage of indoleglycerol phosphate to indole and glyceraldehyde 3-phosphate. This chain is Tryptophan synthase alpha chain, found in Helicobacter pylori (strain P12).